A 338-amino-acid chain; its full sequence is 5-dehydro-2-deoxygluconokinase (338 aa).

Belongs to the carbohydrate kinase PfkB family.

It carries out the reaction 5-dehydro-2-deoxy-D-gluconate + ATP = 6-phospho-5-dehydro-2-deoxy-D-gluconate + ADP + H(+). Its pathway is polyol metabolism; myo-inositol degradation into acetyl-CoA; acetyl-CoA from myo-inositol: step 5/7. Catalyzes the phosphorylation of 5-dehydro-2-deoxy-D-gluconate (2-deoxy-5-keto-D-gluconate or DKG) to 6-phospho-5-dehydro-2-deoxy-D-gluconate (DKGP). The polypeptide is 5-dehydro-2-deoxygluconokinase (Mesomycoplasma hyopneumoniae (strain 7448) (Mycoplasma hyopneumoniae)).